The primary structure comprises 76 residues: ATP synthase subunit c (76 aa).

2 helical membrane-spanning segments follow: residues 12-32 and 54-74; these read LGSIGYGLAAIGPGVGVGIIF and ILGFAFCEALALIGLVMPFVY.

It belongs to the ATPase C chain family. F-type ATPases have 2 components, F(1) - the catalytic core - and F(0) - the membrane proton channel. F(1) has five subunits: alpha(3), beta(3), gamma(1), delta(1), epsilon(1). F(0) has three main subunits: a(1), b(2) and c(10-14). The alpha and beta chains form an alternating ring which encloses part of the gamma chain. F(1) is attached to F(0) by a central stalk formed by the gamma and epsilon chains, while a peripheral stalk is formed by the delta and b chains.

It localises to the cell membrane. Functionally, f(1)F(0) ATP synthase produces ATP from ADP in the presence of a proton or sodium gradient. F-type ATPases consist of two structural domains, F(1) containing the extramembraneous catalytic core and F(0) containing the membrane proton channel, linked together by a central stalk and a peripheral stalk. During catalysis, ATP synthesis in the catalytic domain of F(1) is coupled via a rotary mechanism of the central stalk subunits to proton translocation. In terms of biological role, key component of the F(0) channel; it plays a direct role in translocation across the membrane. A homomeric c-ring of between 10-14 subunits forms the central stalk rotor element with the F(1) delta and epsilon subunits. The protein is ATP synthase subunit c of Streptomyces coelicolor (strain ATCC BAA-471 / A3(2) / M145).